A 115-amino-acid polypeptide reads, in one-letter code: Ribonuclease P protein component (115 aa).

The protein belongs to the RnpA family. As to quaternary structure, consists of a catalytic RNA component (M1 or rnpB) and a protein subunit.

The catalysed reaction is Endonucleolytic cleavage of RNA, removing 5'-extranucleotides from tRNA precursor.. RNaseP catalyzes the removal of the 5'-leader sequence from pre-tRNA to produce the mature 5'-terminus. It can also cleave other RNA substrates such as 4.5S RNA. The protein component plays an auxiliary but essential role in vivo by binding to the 5'-leader sequence and broadening the substrate specificity of the ribozyme. In Natranaerobius thermophilus (strain ATCC BAA-1301 / DSM 18059 / JW/NM-WN-LF), this protein is Ribonuclease P protein component.